The chain runs to 139 residues: Large ribosomal subunit protein uL16c (139 aa).

Positions 1–17 (MLSPKKTKFRKQHRGRM) are enriched in basic residues. Residues 1-23 (MLSPKKTKFRKQHRGRMKGSASK) are disordered.

The protein belongs to the universal ribosomal protein uL16 family. As to quaternary structure, part of the 50S ribosomal subunit.

It localises to the plastid. Its subcellular location is the chloroplast. In Pyropia yezoensis (Susabi-nori), this protein is Large ribosomal subunit protein uL16c.